The following is a 484-amino-acid chain: Deoxyribodipyrimidine photo-lyase (484 aa).

A Photolyase/cryptochrome alpha/beta domain is found at 3-132 (APILFWHRRD…RAVQLWDQLL (130 aa)). Coenzyme F420-(gamma-Glu)n contacts are provided by residues 36–38 (CLD), Arg51, and 101–109 (DIEPYGRDR). Residues 141–148 (GSGNPYSV) are DNA-binding. Residue Tyr228 participates in FAD binding. Arg232 lines the DNA pocket. 240 to 247 (TSGLSPAL) is an FAD binding site. A coenzyme F420-(gamma-Glu)n-binding site is contributed by Lys248. Interaction with DNA regions lie at residues 283–290 (ELAWREFY) and 349–350 (NR). FAD is bound by residues 346 to 352 (WMHNRCW), 380 to 382 (DGD), and Asn386. Residues Gln411 and Lys472 each coordinate DNA.

This sequence belongs to the DNA photolyase class-1 family. In terms of assembly, monomer. The cofactor is FAD. Coenzyme F420-(gamma-Glu)n serves as cofactor.

It carries out the reaction cyclobutadipyrimidine (in DNA) = 2 pyrimidine residues (in DNA).. Involved in repair of UV radiation-induced DNA damage. Catalyzes the light-dependent monomerization (300-600 nm) of cyclobutyl pyrimidine dimers (in cis-syn configuration), which are formed between adjacent bases on the same DNA strand upon exposure to ultraviolet radiation. The polypeptide is Deoxyribodipyrimidine photo-lyase (phr) (Synechococcus sp. (strain ATCC 27144 / PCC 6301 / SAUG 1402/1) (Anacystis nidulans)).